Reading from the N-terminus, the 268-residue chain is Imidazole glycerol phosphate synthase subunit HisF (268 aa).

Catalysis depends on residues Asp-12 and Asp-131.

This sequence belongs to the HisA/HisF family. In terms of assembly, heterodimer of HisH and HisF.

It is found in the cytoplasm. It carries out the reaction 5-[(5-phospho-1-deoxy-D-ribulos-1-ylimino)methylamino]-1-(5-phospho-beta-D-ribosyl)imidazole-4-carboxamide + L-glutamine = D-erythro-1-(imidazol-4-yl)glycerol 3-phosphate + 5-amino-1-(5-phospho-beta-D-ribosyl)imidazole-4-carboxamide + L-glutamate + H(+). It participates in amino-acid biosynthesis; L-histidine biosynthesis; L-histidine from 5-phospho-alpha-D-ribose 1-diphosphate: step 5/9. Its function is as follows. IGPS catalyzes the conversion of PRFAR and glutamine to IGP, AICAR and glutamate. The HisF subunit catalyzes the cyclization activity that produces IGP and AICAR from PRFAR using the ammonia provided by the HisH subunit. In Methanoculleus marisnigri (strain ATCC 35101 / DSM 1498 / JR1), this protein is Imidazole glycerol phosphate synthase subunit HisF.